Here is a 459-residue protein sequence, read N- to C-terminus: Alcohol acyl transferase 1 allele RGc (459 aa).

Catalysis depends on proton acceptor residues His-164 and Asn-385.

It belongs to the plant acyltransferase family. In terms of tissue distribution, expressed at very low levels in the skin of ripe fruit.

In terms of biological role, involved in the biosynthesis of volatile esters which confer ripe apple fruit flavor. Alcohol acyl transferase that can use a wide range of alcohols as substrate to produce esters. The polypeptide is Alcohol acyl transferase 1 allele RGc (Malus domestica (Apple)).